Reading from the N-terminus, the 344-residue chain is Small neutral protease regulatory protein (344 aa).

An HTH lysR-type domain is found at 1 to 60; the sequence is MELEVRHLRALCAIADAGSLHRAARRLGVAQPTLSTQLTRIEQALGGPLFTRERTGCRPT. Residues 20–39 constitute a DNA-binding region (H-T-H motif); that stretch reads LHRAARRLGVAQPTLSTQLT. The segment at 322–344 is disordered; that stretch reads SCGRAEGSRSRRPRDVAPPRPIG. Residues 327 to 338 are compositionally biased toward basic and acidic residues; sequence EGSRSRRPRDVA.

The protein belongs to the LysR transcriptional regulatory family.

In terms of biological role, transcriptional activator of the gene (snpA) for the small neutral protease. This is Small neutral protease regulatory protein (mprR) from Streptomyces lividans.